The following is a 284-amino-acid chain: Bifunctional protein FolD 2 (284 aa).

NADP(+) contacts are provided by residues 166 to 168 (GAS) and Ile-232.

The protein belongs to the tetrahydrofolate dehydrogenase/cyclohydrolase family. As to quaternary structure, homodimer.

It catalyses the reaction (6R)-5,10-methylene-5,6,7,8-tetrahydrofolate + NADP(+) = (6R)-5,10-methenyltetrahydrofolate + NADPH. The catalysed reaction is (6R)-5,10-methenyltetrahydrofolate + H2O = (6R)-10-formyltetrahydrofolate + H(+). The protein operates within one-carbon metabolism; tetrahydrofolate interconversion. Functionally, catalyzes the oxidation of 5,10-methylenetetrahydrofolate to 5,10-methenyltetrahydrofolate and then the hydrolysis of 5,10-methenyltetrahydrofolate to 10-formyltetrahydrofolate. This Colwellia psychrerythraea (strain 34H / ATCC BAA-681) (Vibrio psychroerythus) protein is Bifunctional protein FolD 2.